Reading from the N-terminus, the 336-residue chain is Vacuolar protein sorting-associated protein 26B (336 aa).

Ser302, Ser304, and Ser319 each carry phosphoserine.

This sequence belongs to the VPS26 family. In terms of assembly, component of the heterotrimeric retromer cargo-selective complex (CSC), also described as vacuolar protein sorting VPS subcomplex (VPS,) formed by VPS26 (VPS26A or VPS26B), VPS29 and VPS35. The CSC has a highly elongated structure with VPS26 and VPS29 binding independently at opposite distal ends of VPS35 as central platform. The CSC is believed to associate with variable sorting nexins to form functionally distinct retromer complex variants. The originally described retromer complex (also called SNX-BAR retromer) is a pentamer containing the CSC and a heterodimeric membrane-deforming subcomplex formed between SNX1 or SNX2 and SNX5 or SNX6 (also called SNX-BAR subcomplex); the respective CSC and SNX-BAR subcomplexes associate with low affinity. The CSC associates with SNX3 to form a SNX3-retromer complex. The CSC associates with SNX27, the WASH complex and the SNX-BAR subcomplex to form the SNX27-retromer complex. Interacts with VPS29, VPS35, TBC1D5, GOLPH3, SNX27.

The protein localises to the cytoplasm. The protein resides in the membrane. It is found in the early endosome. It localises to the late endosome. Acts as a component of the retromer cargo-selective complex (CSC). The CSC is believed to be the core functional component of retromer or respective retromer complex variants acting to prevent missorting of selected transmembrane cargo proteins into the lysosomal degradation pathway. The recruitment of the CSC to the endosomal membrane involves RAB7A and SNX3. The SNX-BAR retromer mediates retrograde transport of cargo proteins from endosomes to the trans-Golgi network (TGN) and is involved in endosome-to-plasma membrane transport for cargo protein recycling. The SNX3-retromer mediates the retrograde transport of WLS distinct from the SNX-BAR retromer pathway. The SNX27-retromer is believed to be involved in endosome-to-plasma membrane trafficking and recycling of a broad spectrum of cargo proteins. The CSC seems to act as recruitment hub for other proteins, such as the WASH complex and TBC1D5. May be involved in retrograde transport of SORT1 but not of IGF2R. Acts redundantly with VSP26A in SNX-27 mediated endocytic recycling of SLC2A1/GLUT1. The sequence is that of Vacuolar protein sorting-associated protein 26B (VPS26B) from Homo sapiens (Human).